The chain runs to 72 residues: Toxin Acra II-3 (72 aa).

In terms of domain architecture, LCN-type CS-alpha/beta spans 4–67; sequence PGNYPLDTRG…VWNAAKNYCK (64 aa). Cystine bridges form between Cys18-Cys41, Cys27-Cys46, and Cys31-Cys48.

It belongs to the long (3 C-C) scorpion toxin superfamily. Sodium channel inhibitor family. Beta subfamily. As to expression, expressed by the venom gland.

The protein resides in the secreted. Functionally, binds to sodium channels (Nav) and affects the channel activation process. The sequence is that of Toxin Acra II-3 from Androctonus crassicauda (Arabian fat-tailed scorpion).